The sequence spans 157 residues: Phosphopantetheine adenylyltransferase (157 aa).

Belongs to the eukaryotic CoaD family.

It localises to the cytoplasm. The enzyme catalyses (R)-4'-phosphopantetheine + ATP + H(+) = 3'-dephospho-CoA + diphosphate. The protein operates within cofactor biosynthesis; coenzyme A biosynthesis. Reversibly transfers an adenylyl group from ATP to 4'-phosphopantetheine, yielding dephospho-CoA (dPCoA) and pyrophosphate. In Methanopyrus kandleri (strain AV19 / DSM 6324 / JCM 9639 / NBRC 100938), this protein is Phosphopantetheine adenylyltransferase.